We begin with the raw amino-acid sequence, 584 residues long: Actin-binding protein IPP (584 aa).

The 68-residue stretch at 37-104 (CDVQLQVGKE…IYTGVVNIAV (68 aa)) folds into the BTB domain. 6 Kelch repeats span residues 296-343 (YTRL…VVGG), 344-390 (MVYA…VCYG), 391-437 (AIYA…EMQG), 439-485 (IYAV…ALND), 487-533 (IYAI…TVNG), and 535-583 (LYVS…GVAV).

In terms of tissue distribution, expression seems confined to tissues derived from trophectoderm and primitive endoderm.

The protein localises to the cytoplasm. It localises to the cytoskeleton. May play a role in organizing the actin cytoskeleton. The protein is Actin-binding protein IPP (Ipp) of Mus musculus (Mouse).